Here is a 292-residue protein sequence, read N- to C-terminus: Protoheme IX farnesyltransferase (292 aa).

8 consecutive transmembrane segments (helical) span residues 15–35 (YLVLTKPGIVSLVLITTLGGM), 49–69 (FWTLLGTGLAAAGSAVLNMVI), 104–124 (VFSLVIMLTFVGVLPALLVAL), 147–167 (IGGISGALPPVIGYVAASGSV), 171–191 (AIALFLLMFMWQPPHFWVLAL), 218–238 (TLLYTASLFPVSLIPYLTGLV), 242–262 (YFVVAVVMNLIYLGLTLKFFF), and 271–291 (LFFFSIIYLAVLFGTMIVDMV).

This sequence belongs to the UbiA prenyltransferase family. Protoheme IX farnesyltransferase subfamily.

Its subcellular location is the cell inner membrane. It carries out the reaction heme b + (2E,6E)-farnesyl diphosphate + H2O = Fe(II)-heme o + diphosphate. It participates in porphyrin-containing compound metabolism; heme O biosynthesis; heme O from protoheme: step 1/1. Functionally, converts heme B (protoheme IX) to heme O by substitution of the vinyl group on carbon 2 of heme B porphyrin ring with a hydroxyethyl farnesyl side group. This is Protoheme IX farnesyltransferase from Aquifex aeolicus (strain VF5).